We begin with the raw amino-acid sequence, 546 residues long: Chaperonin GroEL (546 aa).

ATP contacts are provided by residues 30-33 (TLGP), Lys51, 87-91 (DGTTT), Gly415, and Asp496. The disordered stretch occupies residues 526–546 (PEDKPAPAMPGGMGGMGGMDF). Residues 536 to 546 (GGMGGMGGMDF) show a composition bias toward gly residues.

Belongs to the chaperonin (HSP60) family. Forms a cylinder of 14 subunits composed of two heptameric rings stacked back-to-back. Interacts with the co-chaperonin GroES.

It is found in the cytoplasm. It carries out the reaction ATP + H2O + a folded polypeptide = ADP + phosphate + an unfolded polypeptide.. In terms of biological role, together with its co-chaperonin GroES, plays an essential role in assisting protein folding. The GroEL-GroES system forms a nano-cage that allows encapsulation of the non-native substrate proteins and provides a physical environment optimized to promote and accelerate protein folding. This is Chaperonin GroEL from Zymomonas mobilis subsp. mobilis (strain ATCC 31821 / ZM4 / CP4).